The following is a 463-amino-acid chain: Toxin CaTX-A (463 aa).

A signal peptide spans 1–18 (MSRGYSLHLVLFLVLSTA).

Belongs to the jellyfish toxin family. Type II subfamily. Oligomer. In terms of processing, contains disulfide bonds. It is suggested that CaTX-B is synthesized in the tentacle, is modified (become CaTX-A) and then migrates to the nematocyst.

Its subcellular location is the secreted. It is found in the nematocyst. The protein localises to the target cell membrane. Has potent hemolytic activity. Is lethal to crayfish. Causes cutaneous inflammation in humans. May act as a pore-forming toxin, disrupting normal transmembrane ion concentration gradients in susceptible cells. This chain is Toxin CaTX-A, found in Carybdea alata (Hawaiian box jellyfish).